A 522-amino-acid chain; its full sequence is Neuropeptide FF receptor 2 (522 aa).

At 1 to 147 (MNSFFGTPAA…NYYLHQPQVA (147 aa)) the chain is on the extracellular side. Residues 25–49 (KEAGRERRALSVQQRGGPAWSGSLE) are disordered. N-linked (GlcNAc...) asparagine glycosylation is found at N110, N122, and N133. The chain crosses the membrane as a helical span at residues 148–168 (AIFIISYFLIFFLCMMGNTVV). Topologically, residues 169–184 (CFIVMRNKHMHTVTNL) are cytoplasmic. A helical transmembrane segment spans residues 185–205 (FILNLAISDLLVGIFCMPITL). Residues 206–221 (LDNIIAGWPFGNTMCK) are Extracellular-facing. C220 and C308 are disulfide-bonded. A helical membrane pass occupies residues 222–242 (ISGLVQGISVAASVFTLVAIA). Residues 243–262 (VDRFQCVVYPFKPKLTIKTA) lie on the Cytoplasmic side of the membrane. A helical transmembrane segment spans residues 263 to 283 (FVIIMIIWVLAITIMSPSAVM). The Extracellular segment spans residues 284–319 (LHVQEEKYYRVRLNSQNKTSPVYWCREDWPNQEMRK). Residue N300 is glycosylated (N-linked (GlcNAc...) asparagine). A helical membrane pass occupies residues 320–340 (IYTTVLFANIYLAPLSLIVIM). The Cytoplasmic portion of the chain corresponds to 341–377 (YGRIGISLFRAAVPHTGRKNQEQWHVVSRKKQKIIKM). Residues 378-398 (LLIVALLFILSWLPLWTLMML) form a helical membrane-spanning segment. The Extracellular portion of the chain corresponds to 399-413 (SDYADLSPNELQIIN). Residues 414–434 (IYIYPFAHWLAFGNSSVNPII) traverse the membrane as a helical segment. The Cytoplasmic portion of the chain corresponds to 435 to 522 (YGFFNENFRR…LKETTNSSEI (88 aa)).

It belongs to the G-protein coupled receptor 1 family. In terms of tissue distribution, isoform 1 is abundant in placenta. Relatively highly expressed in thymus, testis, and small intestine. Expressed at low levels in several tissues including spleen, prostate, brain, heart, ovary, colon, kidney, lung, liver and pancreas and not expressed in skeletal muscle and leukocytes. Isoform 2 expression is highest in placenta (but at relatively low level compared to isoform 1). Very low level of expression in numerous tissues including adipose tissue and many brain regions. Isoform 3 is expressed in brain and heart and, at lower levels, in kidney, liver, lung and pancreas.

Its subcellular location is the cell membrane. Its function is as follows. Receptor for NPAF (A-18-F-amide) and NPFF (F-8-F-amide) neuropeptides, also known as morphine-modulating peptides. Can also be activated by a variety of naturally occurring or synthetic FMRF-amide like ligands. This receptor mediates its action by association with G proteins that activate a phosphatidylinositol-calcium second messenger system. This Homo sapiens (Human) protein is Neuropeptide FF receptor 2.